The chain runs to 600 residues: Aspartate--tRNA(Asp/Asn) ligase (600 aa).

An L-aspartate-binding site is contributed by E187. Residues 211 to 214 (QIFK) are aspartate. The L-aspartate site is built by R233 and H463. 233 to 235 (RDE) contributes to the ATP binding site. E497 serves as a coordination point for ATP. R504 lines the L-aspartate pocket. 549 to 552 (GIDR) is a binding site for ATP.

This sequence belongs to the class-II aminoacyl-tRNA synthetase family. Type 1 subfamily. As to quaternary structure, homodimer.

It localises to the cytoplasm. It catalyses the reaction tRNA(Asx) + L-aspartate + ATP = L-aspartyl-tRNA(Asx) + AMP + diphosphate. Aspartyl-tRNA synthetase with relaxed tRNA specificity since it is able to aspartylate not only its cognate tRNA(Asp) but also tRNA(Asn). Reaction proceeds in two steps: L-aspartate is first activated by ATP to form Asp-AMP and then transferred to the acceptor end of tRNA(Asp/Asn). The chain is Aspartate--tRNA(Asp/Asn) ligase from Wolbachia sp. subsp. Brugia malayi (strain TRS).